We begin with the raw amino-acid sequence, 428 residues long: Probable G-protein coupled receptor (428 aa).

The Extracellular portion of the chain corresponds to 1-46 (MMADKTSPMITSDHSISNFSTGLFGPHPTVPPDVGVVTSSQSQMKD). A glycan (N-linked (GlcNAc...) asparagine) is linked at Asn18. Residues 47 to 67 (LFGLFCMVTLNLIALLANTGV) form a helical membrane-spanning segment. The Cytoplasmic portion of the chain corresponds to 68–93 (MVAIARAPHLKKFAFVCHLCAVDVLC). Residues 94-114 (AILLMPLGIISSSPFFGTVVF) traverse the membrane as a helical segment. Topologically, residues 115-120 (TILECQ) are extracellular. A helical transmembrane segment spans residues 121–141 (VYIFLNVFLIWLSILTITAIS). Residues 142–162 (VERYFYIVHPMRYEVKMTINL) are Cytoplasmic-facing. The helical transmembrane segment at 163–183 (VIGVMLLIWFKSLLLALVTLF) threads the bilayer. The Extracellular segment spans residues 184-210 (GWPPYGHQSSIAASHCSLHASHSRLRG). The chain crosses the membrane as a helical span at residues 211-231 (VFAVLFCVICFLAPVVVIFSV). The Cytoplasmic portion of the chain corresponds to 232–293 (YSAVYKVARS…PERAFSGGKA (62 aa)). The helical transmembrane segment at 294–314 (ALTLAFIVGQFLVCWLPFFIF) threads the bilayer. Topologically, residues 315 to 428 (HLQMSLTGSM…IPGQIPEEQA (114 aa)) are extracellular. A compositionally biased stretch (polar residues) spans 398 to 414 (SETHPSFANSNPRNMEN). The interval 398–428 (SETHPSFANSNPRNMENQAHKIPGQIPEEQA) is disordered.

Belongs to the G-protein coupled receptor 1 family.

It localises to the cell membrane. The polypeptide is Probable G-protein coupled receptor (Oryzias latipes (Japanese rice fish)).